An 837-amino-acid chain; its full sequence is Enterin neuropeptides (837 aa).

Positions 1-25 (MAKHDVTVMTLLLVVCALHVFDAQG) are cleaved as a signal peptide. Positions 26–47 (TDVKLNDGFLRSGIMNIPFQRR) are excised as a propeptide. Val-57 carries the valine amide modification. Residues 61–134 (SGFQSPVSPS…ENKRFSKENE (74 aa)) constitute a propeptide that is removed on maturation. The residue at position 146 (Val-146) is a Valine amide. Residues 150 to 178 (MDLSALEKELIAKLKAADLLSPLETEAPG) constitute a propeptide that is removed on maturation. The residue at position 190 (Leu-190) is a Leucine amide. Residues 194–201 (MPVDVFPR) constitute a propeptide that is removed on maturation. Valine amide is present on Val-211. A propeptide spanning residues 215–234 (SGNGENYFDDLDTFGDISQR) is cleaved from the precursor. Valine amide is present on Val-244. Residues 248–266 (GNTDFSRNPLARLSQVQNR) constitute a propeptide that is removed on maturation. Valine amide is present on Val-276. Positions 280-285 (SVHNIV) are excised as a propeptide. Val-297 carries the valine amide modification. A propeptide spanning residues 301–325 (DFEDASEGLDEEEGDIDGYSDDLDV) is cleaved from the precursor. 18 positions are modified to valine amide: Val-336, Val-348, Val-360, Val-372, Val-384, Val-396, Val-408, Val-420, Val-432, Val-444, Val-456, Val-468, Val-480, Val-492, Val-504, Val-516, Val-528, and Val-540. Positions 544–595 (ELGEDEINFLKEVDAADISRQLAEEDEKEAMVSVDDKETLSNEEDASEDDFE) are excised as a propeptide. A disordered region spans residues 567 to 594 (EEDEKEAMVSVDDKETLSNEEDASEDDF). Acidic residues predominate over residues 584 to 593 (SNEEDASEDD). Glu-598 carries the post-translational modification Pyrrolidone carboxylic acid (Glu); in form ENl'. Val-606 is subject to Valine amide. A propeptide spanning residues 610–627 (DEEGDMGVEMEEEMESEK) is cleaved from the precursor. Leu-637 carries the leucine amide modification. Gln-641 is modified (pyrrolidone carboxylic acid). Val-649 carries the post-translational modification Valine amide. Pyrrolidone carboxylic acid is present on Gln-653. Valine amide occurs at positions 661 and 673. Gln-677 carries the post-translational modification Pyrrolidone carboxylic acid. Val-685 and Val-697 each carry valine amide. Gln-701 carries the pyrrolidone carboxylic acid modification. Residue Val-709 is modified to Valine amide. Gln-713 carries the post-translational modification Pyrrolidone carboxylic acid. Residue Val-721 is modified to Valine amide. Gln-725 is modified (pyrrolidone carboxylic acid). Val-733 carries the valine amide modification. The propeptide occupies 734 to 837 (GKRSGAEDID…DSHIMATSST (104 aa)). Residues 772-837 (GQPAAANEEE…DSHIMATSST (66 aa)) are disordered. A compositionally biased stretch (acidic residues) spans 778–791 (NEEELQQEAAEESE).

In terms of tissue distribution, high expression in gut and CNS.

The protein resides in the secreted. In terms of biological role, reduce interneurons B4/5 activity. May play a regulatory role in nonfeeding behaviors. This is Enterin neuropeptides (ENPP) from Aplysia californica (California sea hare).